The chain runs to 328 residues: Arabinose 5-phosphate isomerase KdsD (328 aa).

One can recognise an SIS domain in the interval 41–184 (ACEKMFNCTG…AVALLKARGF (144 aa)). Substrate-binding positions include 75–76 (GT), His82, His88, 114–123 (ALIPVLKRLH), and 148–150 (KVP). Residue His82 coordinates Zn(2+). The CBS 1 domain maps to 210–268 (MHTGDEIPHVNKHATLRDALLEITRKNLGMTVICDESMKIDGIFTDGDLRRMFDMGGDM). A substrate-binding site is contributed by Glu275. The 52-residue stretch at 277 to 328 (MTPGGIRVRPGILAVDALNLMQSRHITSVLVADGDQLLGVLHMHDLLRAGVV) folds into the CBS 2 domain.

This sequence belongs to the SIS family. GutQ/KpsF subfamily. In terms of assembly, homotetramer.

The catalysed reaction is D-arabinose 5-phosphate = D-ribulose 5-phosphate. It functions in the pathway carbohydrate biosynthesis; 3-deoxy-D-manno-octulosonate biosynthesis; 3-deoxy-D-manno-octulosonate from D-ribulose 5-phosphate: step 1/3. The protein operates within bacterial outer membrane biogenesis; lipopolysaccharide biosynthesis. Involved in the biosynthesis of 3-deoxy-D-manno-octulosonate (KDO), a unique 8-carbon sugar component of lipopolysaccharides (LPSs). Catalyzes the reversible aldol-ketol isomerization between D-ribulose 5-phosphate (Ru5P) and D-arabinose 5-phosphate (A5P). The protein is Arabinose 5-phosphate isomerase KdsD (kdsD) of Salmonella typhi.